The following is a 146-amino-acid chain: Mitochondrial import receptor subunit TOM20 homolog B (146 aa).

Residues M1 to S5 are Mitochondrial intermembrane-facing. A helical membrane pass occupies residues S6–F25. Residues D26 to E146 are Cytoplasmic-facing. Positions N37–K47 are enriched in basic residues. Positions N37–S56 are disordered. S141 is modified (phosphoserine).

Belongs to the Tom20 family. In terms of assembly, forms part of the preprotein translocase complex of the outer mitochondrial membrane (TOM complex). Interacts with tom22.

The protein localises to the mitochondrion outer membrane. Central component of the receptor complex responsible for the recognition and translocation of cytosolically synthesized mitochondrial preproteins. Together with tom22 functions as the transit peptide receptor at the surface of the mitochondrion outer membrane and facilitates the movement of preproteins into the tom40 translocation pore. The chain is Mitochondrial import receptor subunit TOM20 homolog B (tomm20b) from Danio rerio (Zebrafish).